We begin with the raw amino-acid sequence, 39 residues long: Beta-theraphotoxin-Cm2a (39 aa).

Intrachain disulfides connect C7–C21, C14–C26, and C20–C33. F39 carries the phenylalanine amide modification.

In terms of tissue distribution, expressed by the venom gland.

It localises to the secreted. Functionally, inhibits mammalian voltage-gated sodium channel subtypes Nav1.5/SCN5A and Nav1.8/SCN10A by shifting the voltage dependence of channel activation to more depolarized potentials and by blocking the inward component of the sodium current. In vivo, this toxin causes erect, elevated tail, initial partial ataxia, followed by recovery over approximately 1 hour after injection and the progressive development of shaking. Although paralysis subsides, the body tremors never cease and persist until the end of the experiment. This chain is Beta-theraphotoxin-Cm2a, found in Ceratogyrus marshalli (Straighthorned baboon tarantula).